The sequence spans 141 residues: Putative nickel-responsive regulator (141 aa).

Residues H80, H91, H93, and C99 each contribute to the Ni(2+) site.

Belongs to the transcriptional regulatory CopG/NikR family. Ni(2+) serves as cofactor.

Its function is as follows. Transcriptional regulator. The polypeptide is Putative nickel-responsive regulator (Methanococcus maripaludis (strain DSM 14266 / JCM 13030 / NBRC 101832 / S2 / LL)).